The chain runs to 273 residues: Undecaprenyl-diphosphatase (273 aa).

Helical transmembrane passes span 13-35 (LGVVEGLTEFLPVSSTGHMIIVG), 45-65 (ANTFEVVIQLGSILAVVVMFW), 90-110 (LSLIHILLGMIPAVVMGLIFH), 116-136 (LFNPVNVMYALIVGGVLLIAA), 157-177 (AFVIGCFQCLALWPGFSRSGA), 190-210 (YAASEFSFLLAVPMMMGATVL), 222-242 (GDVPMFAVGFVMAFIVALIAI), and 252-272 (ISFIPFAIYRFIVAAAVYVVF).

It belongs to the UppP family.

The protein localises to the cell inner membrane. It catalyses the reaction di-trans,octa-cis-undecaprenyl diphosphate + H2O = di-trans,octa-cis-undecaprenyl phosphate + phosphate + H(+). Catalyzes the dephosphorylation of undecaprenyl diphosphate (UPP). Confers resistance to bacitracin. The protein is Undecaprenyl-diphosphatase of Klebsiella pneumoniae subsp. pneumoniae (strain ATCC 700721 / MGH 78578).